The following is a 290-amino-acid chain: UPF0761 membrane protein YihY (290 aa).

Transmembrane regions (helical) follow at residues 44-64 (LLSL…FPMF), 104-124 (VGAC…DSAL), 140-160 (FAVY…SLAI), 183-203 (ILPL…VPTT), 210-230 (ALVG…GFAL), and 244-264 (VLAV…IVLL).

The protein belongs to the UPF0761 family.

It localises to the cell inner membrane. The chain is UPF0761 membrane protein YihY from Salmonella paratyphi B (strain ATCC BAA-1250 / SPB7).